The following is a 277-amino-acid chain: 2,3,4,5-tetrahydropyridine-2,6-dicarboxylate N-succinyltransferase (277 aa).

Substrate contacts are provided by Arg-106 and Asp-143.

This sequence belongs to the transferase hexapeptide repeat family. Homotrimer.

It localises to the cytoplasm. The enzyme catalyses (S)-2,3,4,5-tetrahydrodipicolinate + succinyl-CoA + H2O = (S)-2-succinylamino-6-oxoheptanedioate + CoA. The protein operates within amino-acid biosynthesis; L-lysine biosynthesis via DAP pathway; LL-2,6-diaminopimelate from (S)-tetrahydrodipicolinate (succinylase route): step 1/3. In Xylella fastidiosa (strain 9a5c), this protein is 2,3,4,5-tetrahydropyridine-2,6-dicarboxylate N-succinyltransferase.